The following is a 160-amino-acid chain: S-ribosylhomocysteine lyase (160 aa).

Residues His-57, His-61, and Cys-127 each contribute to the Fe cation site.

The protein belongs to the LuxS family. As to quaternary structure, homodimer. Fe cation serves as cofactor.

It catalyses the reaction S-(5-deoxy-D-ribos-5-yl)-L-homocysteine = (S)-4,5-dihydroxypentane-2,3-dione + L-homocysteine. Its function is as follows. Involved in the synthesis of autoinducer 2 (AI-2) which is secreted by bacteria and is used to communicate both the cell density and the metabolic potential of the environment. The regulation of gene expression in response to changes in cell density is called quorum sensing. Catalyzes the transformation of S-ribosylhomocysteine (RHC) to homocysteine (HC) and 4,5-dihydroxy-2,3-pentadione (DPD). The sequence is that of S-ribosylhomocysteine lyase from Streptococcus pneumoniae (strain CGSP14).